Reading from the N-terminus, the 241-residue chain is Glutathione S-transferase theta-3 (241 aa).

The GST N-terminal domain occupies glycine 2–aspartate 82. Glutathione contacts are provided by residues lysine 53–valine 54 and glutamate 66–serine 67. Residues aspartate 88–proline 222 form the GST C-terminal domain.

Belongs to the GST superfamily. Theta family. In terms of assembly, homodimer. In terms of tissue distribution, expressed strongly in liver, and at lower levels in kidney and testis.

It is found in the cytoplasm. The enzyme catalyses RX + glutathione = an S-substituted glutathione + a halide anion + H(+). In terms of biological role, conjugation of reduced glutathione to a wide number of exogenous and endogenous hydrophobic electrophiles. Shows high activity towards 4-nitrobenzyl chloride (4-NBC). Also has lower activity towards 1,2-epoxy-3-(p-nitrophenoxy)propane (EPNP), cumene hydroperoxide, 1-chloro-2,4-dinitrobenzene (CDNB), 7-chloro-4-nitrobenzo-2-oxa-1,3-diazole (NBD-Cl), and ethacrynic acid. This Mus musculus (Mouse) protein is Glutathione S-transferase theta-3.